The chain runs to 118 residues: Hisactophilin-2 (118 aa).

G2 carries the N-myristoyl glycine lipid modification. The segment at 8–109 (AHNGHYLSAE…HVSTSHHHDH (102 aa)) is contains several HHXH repeats. 2 consecutive repeat copies span residues 34-46 (FHIE…VALR) and 74-86 (FHLE…VSIK). Positions 34-86 (FHIENHGSKVALRTHCGKYVSIGDHKQVYLSHHLHGDHSLFHLEHHHGKVSIK) are 2 X 13 AA approximate repeats. Residues 99–118 (GHVSTSHHHDHHATFEEHIL) are disordered.

This sequence belongs to the hisactophilin family. In terms of assembly, homodimer or heterodimer of hatA and hatB, linked by a disulfide bond. Phosphorylated.

The protein resides in the cytoplasm. Its subcellular location is the cell membrane. Its function is as follows. May act as an intracellular pH sensor that links chemotactic signals to responses in the microfilament system of the cells by nucleating actin polymerization or stabilizing the filaments. This Dictyostelium discoideum (Social amoeba) protein is Hisactophilin-2 (hatB).